The sequence spans 112 residues: MNTIPTRCLLGGLLALSLLAYAGEGDGTQHIVIDSGDTARSWEAARQSQEQWNATHGLRNKVNTRVEKDFDRYDQAVDLQEKCNSSQNVNAYWEPNTSRCLDRRTGRSLLAP.

A signal peptide spans 1–22 (MNTIPTRCLLGGLLALSLLAYA).

Belongs to the UPF0482 family.

The sequence is that of UPF0482 protein SG1468 from Sodalis glossinidius (strain morsitans).